A 773-amino-acid polypeptide reads, in one-letter code: Serine/threonine-protein kinase CBK1 (773 aa).

2 stretches are compositionally biased toward polar residues: residues 50-59 and 178-217; these read LHDQYSSHME and GNYN…SPQR. 2 disordered regions span residues 50-111 and 177-275; these read LHDQ…GGNI and NGNY…QQQQ. Low complexity-rich tracts occupy residues 218–256 and 265–275; these read QPAQ…QQQP and QQTQLQQQQQQ. In terms of domain architecture, Protein kinase spans 370–686; the sequence is FHTVQVIGKG…ADEIKSHPFF (317 aa). ATP contacts are provided by residues 376–384 and K399; that span reads IGKGAFGEV. The active-site Proton acceptor is the D493. One can recognise an AGC-kinase C-terminal domain in the interval 687 to 771; sequence RGVDWNTIRQ…SRFDYLTRKN (85 aa).

This sequence belongs to the protein kinase superfamily. STE Ser/Thr protein kinase family. COT1 subfamily.

It catalyses the reaction L-seryl-[protein] + ATP = O-phospho-L-seryl-[protein] + ADP + H(+). The catalysed reaction is L-threonyl-[protein] + ATP = O-phospho-L-threonyl-[protein] + ADP + H(+). In terms of biological role, protein kinase that seems to play a role in the regulation of cell morphogenesis and proliferation. This chain is Serine/threonine-protein kinase CBK1 (CBK1), found in Candida glabrata (strain ATCC 2001 / BCRC 20586 / JCM 3761 / NBRC 0622 / NRRL Y-65 / CBS 138) (Yeast).